Reading from the N-terminus, the 392-residue chain is Integrin-linked kinase-associated serine/threonine phosphatase 2C (392 aa).

Met1 carries the N-acetylmethionine modification. Residues 1–91 are disordered; sequence MDLFGDLPEP…PEEEKNGGEE (91 aa). Polar residues predominate over residues 56 to 70; it reads SGNSGSLATSGSQVV. Over residues 72–91 the composition is skewed to basic and acidic residues; it reads TEGKGAKRKAPEEEKNGGEE. One can recognise a PPM-type phosphatase domain in the interval 108–390; that stretch reads KGYVAERKGE…DNVTVMVVRI (283 aa). Mn(2+) is bound by residues Asp152 and Gly153. Lys210 is modified (N6-acetyllysine). Mn(2+)-binding residues include Asp326 and Asp381.

The protein belongs to the PP2C family. In terms of assembly, interacts with ILK. Requires Mg(2+) as cofactor. It depends on Mn(2+) as a cofactor.

The protein localises to the cytoplasm. The enzyme catalyses O-phospho-L-seryl-[protein] + H2O = L-seryl-[protein] + phosphate. The catalysed reaction is O-phospho-L-threonyl-[protein] + H2O = L-threonyl-[protein] + phosphate. In terms of biological role, protein phosphatase that may play a role in regulation of cell cycle progression via dephosphorylation of its substrates whose appropriate phosphorylation states might be crucial for cell proliferation. Selectively associates with integrin linked kinase (ILK), to modulate cell adhesion and growth factor signaling. Inhibits the ILK-GSK3B signaling axis and may play an important role in inhibiting oncogenic transformation. The sequence is that of Integrin-linked kinase-associated serine/threonine phosphatase 2C (Ilkap) from Mus musculus (Mouse).